We begin with the raw amino-acid sequence, 158 residues long: Ribosome maturation factor RimP (158 aa).

It belongs to the RimP family.

The protein resides in the cytoplasm. In terms of biological role, required for maturation of 30S ribosomal subunits. The chain is Ribosome maturation factor RimP from Lactobacillus helveticus (strain DPC 4571).